The following is a 345-amino-acid chain: KRR1 small subunit processome component homolog (345 aa).

In terms of domain architecture, KH spans 125 to 193 (DIIKIGNLVH…VRDIVLETMN (69 aa)). Over residues 232–245 (NISKRKQPKVKKQK) the composition is skewed to basic residues. Disordered stretches follow at residues 232 to 260 (NISKRKQPKVKKQKKEYTPFPPSQPESKV) and 273 to 329 (QEQK…VDVK). A coiled-coil region spans residues 270–298 (FLNQEQKQAKRNQERTEKQKEAAKRQDER). Basic and acidic residues-rich tracts occupy residues 276 to 302 (KQAKRNQERTEKQKEAAKRQDERRNKD) and 315 to 329 (LKKEDGFSSSKVDVK).

The protein belongs to the KRR1 family. As to quaternary structure, monomer. Component of the ribosomal small subunit (SSU) processome.

The protein localises to the nucleus. Its subcellular location is the nucleolus. Its function is as follows. Required for 40S ribosome biogenesis. Involved in nucleolar processing of pre-18S ribosomal RNA and ribosome assembly. Binds to RNA. Required for female germline development, cell viability during eye development and for survival of dividing cells and epithelial cells during early wing disk development. The polypeptide is KRR1 small subunit processome component homolog (Drosophila erecta (Fruit fly)).